The following is a 565-amino-acid chain: Frizzled-2 (565 aa).

The first 23 residues, 1–23 (MRPRSALPRLLLPLLLLPAAGPA), serve as a signal peptide directing secretion. The Extracellular portion of the chain corresponds to 24-247 (QFHGEKGISI…QEETRFARLW (224 aa)). In terms of domain architecture, FZ spans 34 to 153 (PDHGFCQPIS…HGAEQICVGQ (120 aa)). 5 disulfide bridges follow: Cys-39-Cys-100, Cys-47-Cys-93, Cys-84-Cys-121, Cys-110-Cys-150, and Cys-114-Cys-138. Asn-53 carries N-linked (GlcNAc...) asparagine glycosylation. Asn-154 carries an N-linked (GlcNAc...) asparagine glycan. Residues 160–189 (APALLTTAPPPGLQPGAGGTPGGPGGGGAP) are disordered. Over residues 174 to 188 (PGAGGTPGGPGGGGA) the composition is skewed to gly residues. The chain crosses the membrane as a helical span at residues 248–268 (ILTWSVLCCASTFFTVTTYLV). Topologically, residues 269 to 279 (DMQRFRYPERP) are cytoplasmic. Residues 280-300 (IIFLSGCYTMVSVAYIAGFVL) traverse the membrane as a helical segment. Over 301–327 (QERVVCNERFSEDGYRTVVQGTKKEGC) the chain is Extracellular. Residues 328–348 (TILFMMLYFFSMASSIWWVIL) traverse the membrane as a helical segment. At 349 to 370 (SLTWFLAAGMKWGHEAIEANSQ) the chain is on the cytoplasmic side. Residues 371–391 (YFHLAAWAVPAVKTITILAMG) traverse the membrane as a helical segment. The Extracellular segment spans residues 392–414 (QIDGDLLSGVCFVGLNSLDPLRG). Residues 415-435 (FVLAPLFVYLFIGTSFLLAGF) form a helical membrane-spanning segment. Over 436–461 (VSLFRIRTIMKHDGTKTEKLERLMVR) the chain is Cytoplasmic. Residues 462–482 (IGVFSVLYTVPATIVIACYFY) traverse the membrane as a helical segment. Over 483-519 (EQAFREHWERSWVSQHCKSLAIPCPAHYTPRMSPDFT) the chain is Extracellular. The chain crosses the membrane as a helical span at residues 520–540 (VYMIKYLMTLIVGITSGFWIW). At 541–565 (SGKTLHSWRKFYTRLTNSRHGETTV) the chain is on the cytoplasmic side. The short motif at 543–548 (KTLHSW) is the Lys-Thr-X-X-X-Trp motif, mediates interaction with the PDZ domain of Dvl family members element. Positions 563 to 565 (TTV) match the PDZ-binding motif.

Belongs to the G-protein coupled receptor Fz/Smo family. In terms of assembly, (Microbial infection) Interacts with C.difficile toxin TcdB; frizzled receptors constitute the major host receptors for TcdB in the colonic epithelium. Post-translationally, ubiquitinated by ZNRF3, leading to its degradation by the proteasome. In terms of tissue distribution, widely expressed. In the adult, mainly found in heart, placenta, skeletal muscle, lung, kidney, pancreas, prostate, testis, ovary and colon. In the fetus, expressed in brain, lung and kidney. Low levels in fetal liver.

Its subcellular location is the membrane. The protein localises to the cell membrane. In terms of biological role, receptor for Wnt proteins. Most of frizzled receptors are coupled to the beta-catenin canonical signaling pathway, which leads to the activation of disheveled proteins, inhibition of GSK-3 kinase, nuclear accumulation of beta-catenin and activation of Wnt target genes. A second signaling pathway involving PKC and calcium fluxes has been seen for some family members, but it is not yet clear if it represents a distinct pathway or if it can be integrated in the canonical pathway, as PKC seems to be required for Wnt-mediated inactivation of GSK-3 kinase. Both pathways seem to involve interactions with G-proteins. May be involved in transduction and intercellular transmission of polarity information during tissue morphogenesis and/or in differentiated tissues. Its function is as follows. (Microbial infection) Acts as a receptor for C.difficile toxin TcdB in the colonic epithelium. TcdB occupies the binding site for Wnt-adducted palmitoleate in frizzled receptors and TcdB-binding prevents Wnt-binding and downstream Wnt signaling. The sequence is that of Frizzled-2 (FZD2) from Homo sapiens (Human).